The primary structure comprises 251 residues: MLLICISVLAAISAHPLSSGEMRAAVSNLVREIDSTHLTTKPSLKIIEGLEDNTVSTGESVTLRCDVLSTPTGVIYWEKDGQRIQGDKELNVFEKVLNAMGPTVESGIITSSYQIPCANLHHIGSYKCVATNGHDTVESSAKISVEGQTVKCKSTRRSAPVITMSTESRFELQDNAATLICRADRRANWNWMFEDKKIDFDSGRYELLPSGDLLIRKIQWSDMGSYFCIAHNKYGESRGETFLYPTKKHIA.

The first 19 residues, 1 to 19 (MLLICISVLAAISAHPLSS), serve as a signal peptide directing secretion. 2 consecutive Ig-like C2-type domains span residues 42–144 (PSLK…AKIS) and 160–244 (PVIT…TFLY). 2 disulfide bridges follow: cysteine 65–cysteine 128 and cysteine 181–cysteine 228.

Expressed in PVT, AIM and ASI neurons, in vulva and weakly in body wall muscles.

The protein localises to the secreted. Required for maintaining axon position of PVQ and PVP neurons postembryonically in the ventral nerve cord (VNC) by preventing axons drifting into the opposite side of the VNC that could occur during body growth and movement. The polypeptide is Zwei Ig domain protein zig-3 (Caenorhabditis elegans).